The chain runs to 323 residues: Acetyl-coenzyme A carboxylase carboxyl transferase subunit alpha (323 aa).

One can recognise a CoA carboxyltransferase C-terminal domain in the interval 39-293; that stretch reads RLSKKSQQLT…RRALADSLRQ (255 aa).

Belongs to the AccA family. In terms of assembly, acetyl-CoA carboxylase is a heterohexamer composed of biotin carboxyl carrier protein (AccB), biotin carboxylase (AccC) and two subunits each of ACCase subunit alpha (AccA) and ACCase subunit beta (AccD).

The protein localises to the cytoplasm. It carries out the reaction N(6)-carboxybiotinyl-L-lysyl-[protein] + acetyl-CoA = N(6)-biotinyl-L-lysyl-[protein] + malonyl-CoA. Its pathway is lipid metabolism; malonyl-CoA biosynthesis; malonyl-CoA from acetyl-CoA: step 1/1. In terms of biological role, component of the acetyl coenzyme A carboxylase (ACC) complex. First, biotin carboxylase catalyzes the carboxylation of biotin on its carrier protein (BCCP) and then the CO(2) group is transferred by the carboxyltransferase to acetyl-CoA to form malonyl-CoA. This Burkholderia vietnamiensis (strain G4 / LMG 22486) (Burkholderia cepacia (strain R1808)) protein is Acetyl-coenzyme A carboxylase carboxyl transferase subunit alpha.